We begin with the raw amino-acid sequence, 131 residues long: Insulin-like 3 (131 aa).

The first 20 residues, 1 to 20 (MDPRLPAWALVLLGPALVFA), serve as a signal peptide directing secretion. Cystine bridges form between C34–C116, C46–C129, and C115–C120. The propeptide at 58-104 (PATGGDRELLQWLERRHLLHGLVADSNLTLGPGLQPLPQTSHHHRHH) is c peptide like.

It belongs to the insulin family. Heterodimer of a B chain and an A chain linked by two disulfide bonds. As to expression, expressed in prenatal and postnatal Leydig cells. Found as well in the corpus luteum, trophoblast, fetal membranes and breast.

The protein resides in the secreted. Seems to play a role in testicular function. May be a trophic hormone with a role in testicular descent in fetal life. Is a ligand for LGR8 receptor. In Homo sapiens (Human), this protein is Insulin-like 3 (INSL3).